Consider the following 299-residue polypeptide: Nicotinate-nucleotide pyrophosphorylase [carboxylating] (299 aa).

Residues 8–12 (HLLPP) are important for hexamer formation. Residues Arg102, 138 to 139 (RK), 160 to 161 (HR), Lys171, Glu201, Asp222, 248 to 250 (SGG), and Gly270 each bind quinolinate. Thr291 is subject to Phosphothreonine.

The protein belongs to the NadC/ModD family. In terms of assembly, hexamer formed by 3 homodimers.

The enzyme catalyses nicotinate beta-D-ribonucleotide + CO2 + diphosphate = quinolinate + 5-phospho-alpha-D-ribose 1-diphosphate + 2 H(+). The protein operates within cofactor biosynthesis; NAD(+) biosynthesis; nicotinate D-ribonucleotide from quinolinate: step 1/1. Functionally, involved in the catabolism of quinolinic acid (QA). This chain is Nicotinate-nucleotide pyrophosphorylase [carboxylating] (QPRT), found in Bos taurus (Bovine).